Here is a 112-residue protein sequence, read N- to C-terminus: Transcriptional regulator ClgR (112 aa).

Residues 13–67 (LRGARMSQGRTLREVSDSARVSLGYLSEIERGRKEPSSELLSAICTALQLPLSVV) enclose the HTH cro/C1-type domain. Residues 24–43 (LREVSDSARVSLGYLSEIER) constitute a DNA-binding region (H-T-H motif).

Functionally, key stress-response regulator that plays an important role in multiple regulatory networks in response to different stress conditions. Required to manage host-derived stress during infection. Plays a role during hypoxia and reaeration. Controls the expression of many genes involved in heat shock, virulence, lipid metabolism, transport or regulation, including clpP1, clpP2, clpC1, hsp, groES, otsA, pknD, prcA and prcB. May function by protecting intracellular redox potential and by inducing the expression of trehalose, a constituent of cell walls that is important for defense against cell-surface and oxidative stress. Also performs different functions during stress response and is important for the pathogenicity of M.tuberculosis in vivo, regardless of the induction of the Clp proteolytic pathway. May directly activate SigE and/or SigH. This is Transcriptional regulator ClgR (clgR) from Mycobacterium tuberculosis (strain CDC 1551 / Oshkosh).